A 40-amino-acid polypeptide reads, in one-letter code: Photosystem II reaction center protein J (40 aa).

Residues 8–28 (IPLWLIGTVTGIIVIGLIGIF) traverse the membrane as a helical segment.

Belongs to the PsbJ family. As to quaternary structure, PSII is composed of 1 copy each of membrane proteins PsbA, PsbB, PsbC, PsbD, PsbE, PsbF, PsbH, PsbI, PsbJ, PsbK, PsbL, PsbM, PsbT, PsbX, PsbY, PsbZ, Psb30/Ycf12, at least 3 peripheral proteins of the oxygen-evolving complex and a large number of cofactors. It forms dimeric complexes.

The protein localises to the plastid. It localises to the chloroplast thylakoid membrane. Functionally, one of the components of the core complex of photosystem II (PSII). PSII is a light-driven water:plastoquinone oxidoreductase that uses light energy to abstract electrons from H(2)O, generating O(2) and a proton gradient subsequently used for ATP formation. It consists of a core antenna complex that captures photons, and an electron transfer chain that converts photonic excitation into a charge separation. In Piper cenocladum (Ant piper), this protein is Photosystem II reaction center protein J.